Reading from the N-terminus, the 87-residue chain is Small ribosomal subunit protein uS15c (87 aa).

It belongs to the universal ribosomal protein uS15 family. In terms of assembly, part of the 30S ribosomal subunit.

The protein resides in the plastid. Its subcellular location is the chloroplast. This chain is Small ribosomal subunit protein uS15c (rps15), found in Nymphaea alba (White water-lily).